Here is a 248-residue protein sequence, read N- to C-terminus: 2,3-bisphosphoglycerate-dependent phosphoglycerate mutase (248 aa).

Substrate-binding positions include 8–15 (RHGESIWN), 21–22 (TG), arginine 60, 87–90 (EKHY), lysine 98, 114–115 (RR), and 183–184 (GN). Catalysis depends on histidine 9, which acts as the Tele-phosphohistidine intermediate. Glutamate 87 serves as the catalytic Proton donor/acceptor.

This sequence belongs to the phosphoglycerate mutase family. BPG-dependent PGAM subfamily.

It carries out the reaction (2R)-2-phosphoglycerate = (2R)-3-phosphoglycerate. It participates in carbohydrate degradation; glycolysis; pyruvate from D-glyceraldehyde 3-phosphate: step 3/5. Its function is as follows. Catalyzes the interconversion of 2-phosphoglycerate and 3-phosphoglycerate. In Parabacteroides distasonis (strain ATCC 8503 / DSM 20701 / CIP 104284 / JCM 5825 / NCTC 11152), this protein is 2,3-bisphosphoglycerate-dependent phosphoglycerate mutase.